Here is a 139-residue protein sequence, read N- to C-terminus: Putative pre-16S rRNA nuclease (139 aa).

The protein belongs to the YqgF nuclease family.

It is found in the cytoplasm. Functionally, could be a nuclease involved in processing of the 5'-end of pre-16S rRNA. The protein is Putative pre-16S rRNA nuclease of Streptococcus agalactiae serotype Ia (strain ATCC 27591 / A909 / CDC SS700).